We begin with the raw amino-acid sequence, 75 residues long: Translation initiation factor IF-1 (75 aa).

The 72-residue stretch at 1–72 folds into the S1-like domain; it reads MSKQDLIEME…TKGRITYRLK (72 aa).

This sequence belongs to the IF-1 family. As to quaternary structure, component of the 30S ribosomal translation pre-initiation complex which assembles on the 30S ribosome in the order IF-2 and IF-3, IF-1 and N-formylmethionyl-tRNA(fMet); mRNA recruitment can occur at any time during PIC assembly.

It is found in the cytoplasm. Functionally, one of the essential components for the initiation of protein synthesis. Stabilizes the binding of IF-2 and IF-3 on the 30S subunit to which N-formylmethionyl-tRNA(fMet) subsequently binds. Helps modulate mRNA selection, yielding the 30S pre-initiation complex (PIC). Upon addition of the 50S ribosomal subunit IF-1, IF-2 and IF-3 are released leaving the mature 70S translation initiation complex. The polypeptide is Translation initiation factor IF-1 (Synechocystis sp. (strain ATCC 27184 / PCC 6803 / Kazusa)).